Consider the following 240-residue polypeptide: Transcriptional activator protein VanR (240 aa).

The HTH luxR-type domain maps to 169 to 234 (DAKPRAVLTA…QAITKAILGG (66 aa)). Positions 193 to 212 (AWEIATIINTSERTVKFHFS) form a DNA-binding region, H-T-H motif.

The protein belongs to the autoinducer-regulated transcriptional regulatory protein family.

In terms of biological role, probable transcriptional activator. Binds to autoinducer molecule ODHL. The polypeptide is Transcriptional activator protein VanR (vanR) (Vibrio anguillarum (Listonella anguillarum)).